We begin with the raw amino-acid sequence, 222 residues long: UPF0173 metal-dependent hydrolase Mboo_0816 (222 aa).

It belongs to the UPF0173 family.

The protein is UPF0173 metal-dependent hydrolase Mboo_0816 of Methanoregula boonei (strain DSM 21154 / JCM 14090 / 6A8).